The chain runs to 452 residues: Probable splicing factor, arginine/serine-rich 7 (452 aa).

2 RRM domains span residues 10-91 (KILH…YPNP) and 163-240 (RTVY…HSRV). A disordered region spans residues 258-452 (EEAIRMGRNG…GNGDVVMASE (195 aa)). The span at 259-272 (EAIRMGRNGDDRDR) shows a compositional bias: basic and acidic residues. The segment covering 273–290 (RRSRSPRRRRSPSPRRRR) has biased composition (basic residues). Residues 291 to 305 (DSRDRDRDRDRDRRR) show a composition bias toward basic and acidic residues. Composition is skewed to basic residues over residues 323–335 (KRSR…RRSR), 345–360 (KRSR…KSRD), and 370–382 (SKDR…RSRS). A compositionally biased stretch (basic and acidic residues) spans 383-421 (RSPEKRRDKEDRKTEKKENENESSLREKLLEKKAARKDS).

Belongs to the splicing factor SR family. Extensively phosphorylated on serine residues in the RS domain.

It is found in the nucleus. The sequence is that of Probable splicing factor, arginine/serine-rich 7 (rsp-7) from Caenorhabditis elegans.